A 306-amino-acid polypeptide reads, in one-letter code: MSKPRSNRRHIDGVLLIDKPYDISSNNALQKARWLLNAAKAGHTGVLDPLATGLLPVCLGEATKFSSYLLDADKGYRATVRFGVVTTTGDVEGEVVSERPVEFGREQLEAALARFRGEISQVPPMYSALKHQGKPLYEYARAGIEVPREARQVTIRKLELLSFDGVSAEIDVLCTKGTYIRTLGCDIGEALGCGAHLTALRRTATGGFSLDESHRLADLESLDMPAREALLMPADVLVMHFPQLELADEEIGKFLHGQPVRFEQKCEKMQRFRVYQQSSRRFVGLGEARGDGRLHPIRLLANQAQA.

Asp-48 acts as the Nucleophile in catalysis.

It belongs to the pseudouridine synthase TruB family. Type 1 subfamily.

It catalyses the reaction uridine(55) in tRNA = pseudouridine(55) in tRNA. Its function is as follows. Responsible for synthesis of pseudouridine from uracil-55 in the psi GC loop of transfer RNAs. The polypeptide is tRNA pseudouridine synthase B (Chromobacterium violaceum (strain ATCC 12472 / DSM 30191 / JCM 1249 / CCUG 213 / NBRC 12614 / NCIMB 9131 / NCTC 9757 / MK)).